Here is a 339-residue protein sequence, read N- to C-terminus: MEILLQKVYDQENLSKEEMTMIATEIFEGRLSKTKIAAFLMALKVKGETAEEMAGIAQAMQRVAIQVAFPAGTAMDNCGTGGDKSNSFNISTTSAFVLAAAGIPVAKHGNRSISSRSGSADVCQELGIDINMRPEDMTYLLEKVGIAFLFAPHVHPNMKYVMDVRKELGTPTIFNLIGPLTNPVHLETQLMGIYRRDLLEQTAEVLGQLGRKRAVVLNGAGFMDEASLAGENHYALYENGEVHLYTLRPEDVGLTSYPLEAITGGEAKENAAILRSVLDGEPGAYLDTVLLNAGFGLFANGKVTTVQEGVDLARDLIRSGLAKQKLADLITYQKEVLAK.

Residues Gly79, 82-83, Ser87, 89-92, 107-115, and Ser119 each bind 5-phospho-alpha-D-ribose 1-diphosphate; these read GD, NIST, and KHGNRSISS. Anthranilate is bound at residue Gly79. Ser91 is a binding site for Mg(2+). Residue Asn110 participates in anthranilate binding. Arg165 provides a ligand contact to anthranilate. The Mg(2+) site is built by Asp224 and Glu225.

This sequence belongs to the anthranilate phosphoribosyltransferase family. As to quaternary structure, homodimer. The cofactor is Mg(2+).

The catalysed reaction is N-(5-phospho-beta-D-ribosyl)anthranilate + diphosphate = 5-phospho-alpha-D-ribose 1-diphosphate + anthranilate. It functions in the pathway amino-acid biosynthesis; L-tryptophan biosynthesis; L-tryptophan from chorismate: step 2/5. Its function is as follows. Catalyzes the transfer of the phosphoribosyl group of 5-phosphorylribose-1-pyrophosphate (PRPP) to anthranilate to yield N-(5'-phosphoribosyl)-anthranilate (PRA). This chain is Anthranilate phosphoribosyltransferase, found in Listeria monocytogenes serotype 4b (strain CLIP80459).